The chain runs to 223 residues: UPF0641 membrane protein PJ4664.05 (223 aa).

5 consecutive transmembrane segments (helical) span residues 10–30 (FNSF…FNWI), 49–69 (LTVL…FSDI), 81–101 (ILLY…WSIV), 146–166 (LSIG…MLWV), and 190–210 (TIFY…LKMV).

It belongs to the UPF0641 family.

Its subcellular location is the endoplasmic reticulum membrane. This chain is UPF0641 membrane protein PJ4664.05, found in Schizosaccharomyces pombe (strain 972 / ATCC 24843) (Fission yeast).